The chain runs to 141 residues: Hemoglobin subunit alpha-D (141 aa).

The Globin domain occupies 1 to 141 (VLTAEDKKLI…VAAVLAEKYR (141 aa)). Heme b is bound by residues histidine 58 and histidine 87.

The protein belongs to the globin family. As to quaternary structure, heterotetramer of two alpha-D chains and two beta chains. Red blood cells.

In terms of biological role, involved in oxygen transport from the lung to the various peripheral tissues. This is Hemoglobin subunit alpha-D (HBAD) from Sturnus vulgaris (Starling).